We begin with the raw amino-acid sequence, 265 residues long: 2-Cys peroxiredoxin BAS1, chloroplastic (265 aa).

The N-terminal 65 residues, 1–65 (MACVASSTTL…SSTSRRSFAV (65 aa)), are a transit peptide targeting the chloroplast. The 160-residue stretch at 73 to 232 (PLVGNKAPDF…TMRTLQALQY (160 aa)) folds into the Thioredoxin domain. C119 functions as the Cysteine sulfenic acid (-SOH) intermediate in the catalytic mechanism.

This sequence belongs to the peroxiredoxin family. AhpC/Prx1 subfamily. As to quaternary structure, homodimer; disulfide-linked, upon oxidation.

The protein localises to the plastid. Its subcellular location is the chloroplast. It catalyses the reaction a hydroperoxide + [thioredoxin]-dithiol = an alcohol + [thioredoxin]-disulfide + H2O. Its function is as follows. Thiol-specific peroxidase that catalyzes the reduction of hydrogen peroxide and organic hydroperoxides to water and alcohols, respectively. Plays a role in cell protection against oxidative stress by detoxifying peroxides. May be an antioxidant enzyme particularly in the developing shoot and photosynthesizing leaf. The polypeptide is 2-Cys peroxiredoxin BAS1, chloroplastic (BAS1) (Spinacia oleracea (Spinach)).